Here is a 78-residue protein sequence, read N- to C-terminus: Bowman-Birk type proteinase inhibitors I-A, I-B, and I-A' (78 aa).

7 cysteine pairs are disulfide-bonded: C18–C72, C19–C34, C22–C68, C24–C32, C42–C49, C46–C61, and C51–C59.

The protein belongs to the Bowman-Birk serine protease inhibitor family.

In terms of biological role, these inhibitors strongly inhibit trypsin. The polypeptide is Bowman-Birk type proteinase inhibitors I-A, I-B, and I-A' (Phaseolus angularis (Azuki bean)).